The sequence spans 1082 residues: Transcription elongation factor SPT5 (1082 aa).

Acidic residues predominate over residues 1–28; it reads MSDSEDSNFSEEEDSERSSEAEEAEVEE. The tract at residues 1–88 is disordered; that stretch reads MSDSEDSNFS…DVDDEYEDED (88 aa). 2 positions are modified to phosphoserine: S32 and S36. Composition is skewed to acidic residues over residues 38–62 and 76–88; these read KEEE…EDDD and DEAD…EDED. Residue K141 forms a Glycyl lysine isopeptide (Lys-Gly) (interchain with G-Cter in SUMO2) linkage. The tract at residues 174–268 is interaction with SUPT4H1 and SUPT4H2; sequence DPNLWTVKCK…TDVLKVVKEV (95 aa). One can recognise a KOW 1 domain in the interval 271-304; the sequence is LKPKSWVRLKRGIYKDDIAQVDYVEPSQNTISLK. Residues 311–418 are interaction with RNA polymerase II; sequence YDRIKARMSL…STGKEREHNF (108 aa). The short motif at 326 to 332 is the UBR5-degron element; the sequence is KRKKFKR. 2 consecutive KOW domains span residues 418–449 and 470–501; these read FQPG…ITIM and FKMG…VILF. RNA is bound at residue K577. Residues 592–625 enclose the KOW 4 domain; the sequence is IHVKDIVKVIDGPHSGREGEIRHLYRSFAFLHCK. R617 contacts DNA. T661 carries the post-translational modification Phosphothreonine. Residues S664 and S684 each carry the phosphoserine modification. A disordered region spans residues 669-694; that stretch reads SPMHPSAEGQHGGFGSPGGMSRGRGR. Gly residues predominate over residues 678-690; sequence QHGGFGSPGGMSR. R690 and R692 each carry asymmetric dimethylarginine; alternate. Residues R690 and R692 each carry the omega-N-methylarginine; alternate modification. Residue R692 is modified to Symmetric dimethylarginine; alternate. Residues 698–731 enclose the KOW 5 domain; the sequence is ELIGQTVRISQGPYKGYIGVVKDATESTARVELH. K712 bears the N6-acetyllysine mark. Over residues 741 to 801 the composition is skewed to polar residues; the sequence is RQRLTTVDSQ…RTPHYGSQTP (61 aa). The segment at 741 to 972 is disordered; the sequence is RQRLTTVDSQ…GSGIEQNSSD (232 aa). Residues 748 to 753 form a CTR1-1; approximate repeat; the sequence is DSQRPG. The segment at 748-811 is 9 X 7 AA approximate tandem repeats of G-S-[QR]-T-P-X-[YQ], motif CTR1; sequence DSQRPGGMTS…LHDGSRTPAQ (64 aa). A CTR1-2 repeat occupies 754–759; that stretch reads GMTSTY. Residues 760–765 form a CTR1-3 repeat; sequence GRTPMY. One copy of the CTR1-4 repeat lies at 766–772; it reads GSQTPMY. A phosphothreonine; by CDK9 mark is found at T769 and T778. The stretch at 775–781 is one CTR1-5 repeat; sequence GSRTPMY. One copy of the CTR1-6 repeat lies at 782–788; it reads GSQTPLQ. S783 carries the phosphoserine modification. Phosphothreonine occurs at positions 785 and 793. One copy of the CTR1-7 repeat lies at 790–796; it reads GSRTPHY. Residues 797–803 form a CTR1-8 repeat; it reads GSQTPLH. S798 is modified (phosphoserine). 2 positions are modified to phosphothreonine: T800 and T808. One copy of the CTR1-9 repeat lies at 805 to 811; that stretch reads GSRTPAQ. Over residues 828–838 the composition is skewed to acidic residues; sequence EEYEYAFDDEP. Residues 838 to 845 form a CTR2-1 repeat; that stretch reads PTPSPQAY. Residues 838–944 are 10 X 8 AA approximate tandem repeats of P-[TS]-P-S-P-[QA]-[SG]-Y, motif CTR2; it reads PTPSPQAYGG…ASPSPSPVGY (107 aa). One copy of the CTR2-2; approximate repeat lies at 848–856; the sequence is TPNPQTPGY. The segment covering 851–860 has biased composition (pro residues); the sequence is PQTPGYPDPS. The CTR2-3; approximate repeat unit spans residues 857–863; it reads PDPSSPQ. Positions 861 to 884 are enriched in polar residues; the sequence is SPQVNPQYNPQTPGTPAMYNTDQF. A CTR2-4; half-length repeat occupies 875–879; that stretch reads TPAMY. The stretch at 890–896 is one CTR2-5; approximate repeat; the sequence is PSPQGSY. A compositionally biased stretch (low complexity) spans 890 to 905; that stretch reads PSPQGSYQPSPSPQSY. The CTR2-6 repeat unit spans residues 898 to 905; sequence PSPSPQSY. The CTR2-7; approximate repeat unit spans residues 910 to 915; sequence PSPAGY. The CTR2-8 repeat unit spans residues 918 to 924; it reads THSPASY. A CTR2-9 repeat occupies 926-933; sequence PTPSPMAY. One copy of the CTR2-10 repeat lies at 937 to 944; sequence PSPSPVGY. T1028 carries the phosphothreonine modification. K1031 participates in a covalent cross-link: Glycyl lysine isopeptide (Lys-Gly) (interchain with G-Cter in SUMO2).

Belongs to the SPT5 family. Interacts with SUPT4H1 to form DSIF. DSIF interacts with the positive transcription elongation factor b complex (P-TEFb complex), which is composed of CDK9 and cyclin-T (CCNT1 or CCNT2). DSIF interacts with RNA polymerase II, and this interaction is reduced by phosphorylation of the C-terminal domain (CTD) of POLR2A by P-TEFb. DSIF also interacts with the NELF complex, which is composed of NELFA, NELFB, NELFD and NELFE, and this interaction occurs following prior binding of DSIF to RNA polymerase II. Also interacts with PRMT1/HRMT1L2, HTATSF1/TATSF1, RNGTT/CAP1A, PRMT5/SKB1, SUPT6H, and can interact with PIN1. Component of a complex which is at least composed of HTATSF1/Tat-SF1, the P-TEFb complex components CDK9 and CCNT1, RNA polymerase II, SUPT5H, and NCL/nucleolin. Interacts with MCM3AP. In terms of processing, methylated by PRMT1/HRMT1L2 and PRMT5/SKB1. Methylation negatively regulates interaction with P-TEFb and RNA polymerase II. Post-translationally, phosphorylated by CDK7 and CDK9. Phosphorylation by P-TEFb (CDK9) at Thr residues of the C-terminal repeats alleviates transcriptional pausing and promotes transcription elongation. Dephosphorylated by the INTAC complex when transcripts are unfavorably configured for transcriptional elongation, leading to premature transcription termination: dephosphorylation is mediated by the PPP2CA component of the INTAC complex. Dephosphorylated by the PNUTS-PP1 complex in termination zones downstream of poly(A) sites, thereby promoting deceleration of RNA polymerase II transcription. Dephosphorylated by the PNUTS-PP1 complex in termination zones downstream of poly(A) sites, thereby promoting deceleration of RNA polymerase II transcription. Phosphorylation may also stimulate interaction with PIN1. Bulk phosphorylation occurs predominantly in mitosis. Ubiquitinated by UBR5 when not assembled in the DSIF complex, leading to its degradation: UBR5 recognizes and binds a degron that is not accessible when SUPT5H is part of the DSIF complex.

The protein resides in the nucleus. Component of the DRB sensitivity-inducing factor complex (DSIF complex), which regulates mRNA processing and transcription elongation by RNA polymerase II. DSIF positively regulates mRNA capping by stimulating the mRNA guanylyltransferase activity of RNGTT/CAP1A. DSIF also acts cooperatively with the negative elongation factor complex (NELF complex) to enhance transcriptional pausing at sites proximal to the promoter. Transcriptional pausing may facilitate the assembly of an elongation competent RNA polymerase II complex. DSIF and NELF promote pausing by inhibition of the transcription elongation factor TFIIS/S-II. TFIIS/S-II binds to RNA polymerase II at transcription pause sites and stimulates the weak intrinsic nuclease activity of the enzyme. Cleavage of blocked transcripts by RNA polymerase II promotes the resumption of transcription from the new 3' terminus and may allow repeated attempts at transcription through natural pause sites. Following phosphorylation by CDK9, DSIF can also positively regulate transcriptional elongation. The chain is Transcription elongation factor SPT5 (Supt5h) from Mus musculus (Mouse).